Here is a 327-residue protein sequence, read N- to C-terminus: GMP reductase (327 aa).

Catalysis depends on C176, which acts as the Thioimidate intermediate. 205–228 (IIADGGIRTHGDIAKSIRFGASMV) is a binding site for NADP(+).

This sequence belongs to the IMPDH/GMPR family. GuaC type 2 subfamily.

It catalyses the reaction IMP + NH4(+) + NADP(+) = GMP + NADPH + 2 H(+). Functionally, catalyzes the irreversible NADPH-dependent deamination of GMP to IMP. It functions in the conversion of nucleobase, nucleoside and nucleotide derivatives of G to A nucleotides, and in maintaining the intracellular balance of A and G nucleotides. This is GMP reductase from Streptococcus agalactiae serotype III (strain NEM316).